The chain runs to 194 residues: Protein GrpE (194 aa).

It belongs to the GrpE family. In terms of assembly, homodimer.

The protein localises to the cytoplasm. Participates actively in the response to hyperosmotic and heat shock by preventing the aggregation of stress-denatured proteins, in association with DnaK and GrpE. It is the nucleotide exchange factor for DnaK and may function as a thermosensor. Unfolded proteins bind initially to DnaJ; upon interaction with the DnaJ-bound protein, DnaK hydrolyzes its bound ATP, resulting in the formation of a stable complex. GrpE releases ADP from DnaK; ATP binding to DnaK triggers the release of the substrate protein, thus completing the reaction cycle. Several rounds of ATP-dependent interactions between DnaJ, DnaK and GrpE are required for fully efficient folding. The chain is Protein GrpE from Aliivibrio fischeri (strain MJ11) (Vibrio fischeri).